Here is a 183-residue protein sequence, read N- to C-terminus: Peptidyl-tRNA hydrolase (183 aa).

Residue Tyr-14 coordinates tRNA. His-19 acts as the Proton acceptor in catalysis. TRNA-binding residues include Tyr-64, Asn-66, and Asn-112.

It belongs to the PTH family. In terms of assembly, monomer.

It is found in the cytoplasm. It carries out the reaction an N-acyl-L-alpha-aminoacyl-tRNA + H2O = an N-acyl-L-amino acid + a tRNA + H(+). Hydrolyzes ribosome-free peptidyl-tRNAs (with 1 or more amino acids incorporated), which drop off the ribosome during protein synthesis, or as a result of ribosome stalling. In terms of biological role, catalyzes the release of premature peptidyl moieties from peptidyl-tRNA molecules trapped in stalled 50S ribosomal subunits, and thus maintains levels of free tRNAs and 50S ribosomes. This chain is Peptidyl-tRNA hydrolase, found in Anaplasma phagocytophilum (strain HZ).